Reading from the N-terminus, the 255-residue chain is Thiazole synthase (255 aa).

Lysine 96 acts as the Schiff-base intermediate with DXP in catalysis. 1-deoxy-D-xylulose 5-phosphate is bound by residues glycine 157, 183 to 184 (AG), and 205 to 206 (NT).

It belongs to the ThiG family. As to quaternary structure, homotetramer. Forms heterodimers with either ThiH or ThiS.

It is found in the cytoplasm. It catalyses the reaction [ThiS sulfur-carrier protein]-C-terminal-Gly-aminoethanethioate + 2-iminoacetate + 1-deoxy-D-xylulose 5-phosphate = [ThiS sulfur-carrier protein]-C-terminal Gly-Gly + 2-[(2R,5Z)-2-carboxy-4-methylthiazol-5(2H)-ylidene]ethyl phosphate + 2 H2O + H(+). It functions in the pathway cofactor biosynthesis; thiamine diphosphate biosynthesis. In terms of biological role, catalyzes the rearrangement of 1-deoxy-D-xylulose 5-phosphate (DXP) to produce the thiazole phosphate moiety of thiamine. Sulfur is provided by the thiocarboxylate moiety of the carrier protein ThiS. In vitro, sulfur can be provided by H(2)S. This Staphylococcus epidermidis (strain ATCC 35984 / DSM 28319 / BCRC 17069 / CCUG 31568 / BM 3577 / RP62A) protein is Thiazole synthase.